The sequence spans 404 residues: Probable tRNA sulfurtransferase (404 aa).

Residues 61–166 (EAISERLKDV…SGYSYIMCGE (106 aa)) form the THUMP domain. ATP-binding positions include 184 to 185 (LL), 209 to 210 (HF), arginine 266, glycine 288, and glutamine 297.

The protein belongs to the ThiI family.

It is found in the cytoplasm. The catalysed reaction is [ThiI sulfur-carrier protein]-S-sulfanyl-L-cysteine + a uridine in tRNA + 2 reduced [2Fe-2S]-[ferredoxin] + ATP + H(+) = [ThiI sulfur-carrier protein]-L-cysteine + a 4-thiouridine in tRNA + 2 oxidized [2Fe-2S]-[ferredoxin] + AMP + diphosphate. The enzyme catalyses [ThiS sulfur-carrier protein]-C-terminal Gly-Gly-AMP + S-sulfanyl-L-cysteinyl-[cysteine desulfurase] + AH2 = [ThiS sulfur-carrier protein]-C-terminal-Gly-aminoethanethioate + L-cysteinyl-[cysteine desulfurase] + A + AMP + 2 H(+). Its pathway is cofactor biosynthesis; thiamine diphosphate biosynthesis. Its function is as follows. Catalyzes the ATP-dependent transfer of a sulfur to tRNA to produce 4-thiouridine in position 8 of tRNAs, which functions as a near-UV photosensor. Also catalyzes the transfer of sulfur to the sulfur carrier protein ThiS, forming ThiS-thiocarboxylate. This is a step in the synthesis of thiazole, in the thiamine biosynthesis pathway. The sulfur is donated as persulfide by IscS. This is Probable tRNA sulfurtransferase from Bacillus cereus (strain G9842).